Consider the following 556-residue polypeptide: Guanine nucleotide-binding protein-like 3 homolog (556 aa).

The segment at 29 to 50 is disordered; the sequence is NRKVKKEAKKNGTTNKKEKTIS. A coiled-coil region spans residues 58-95; the sequence is KEEILVQAEQEREKIKVRQEAAKEAAKIHRIEKRKNNL. The CP-type G domain maps to 138–317; sequence ASEVRKTVEI…LIDSPGVILV (180 aa). GTP-binding positions include 184 to 187, 266 to 273, and 310 to 313; these read NKID, GFPNVGKS, and DSPG. Disordered stretches follow at residues 461–508 and 525–556; these read APHN…PESL and KKQK…AMEM. Residues 466 to 478 are compositionally biased toward acidic residues; that stretch reads DEEEDDDDEMETD. Residues 525-535 are compositionally biased toward basic residues; sequence KKQKKKSKKTA.

It belongs to the TRAFAC class YlqF/YawG GTPase family.

It localises to the nucleus. May play a role in regulating cellular proliferation in both germline and somatic tissues. The sequence is that of Guanine nucleotide-binding protein-like 3 homolog from Caenorhabditis elegans.